The primary structure comprises 401 residues: MARNIVVEEIVRTPVEMQQVELVERKGIGHPDSIADGIAEAVSRALCREYIRRYGVILHHNTDQVEVVGGRAYPRFGGGEVVKPIYILLSGRAVELVDQELFPVHEVAIKAAKNYLKNAIRHLDVENHVIIDSRIGQGSVDLVSVFNKARENPIPLANDTSFGVGYAPLSETERLVLETEKLLNSEKFKKEYPAVGEDIKVMGLRRGNEIDLTIAAAIVDSEVATPKEYLEVKDKIKEAVEELAKEITSRKVNIYVNTADDPERGIYYITVTGTSAEAGDDGSVGRGNRVNGLITPNRHMSMEAAAGKNPVSHVGKIYNILAMLIAEDIAKTLPVEEVYVRILSQIGKPIDQPLVASIQVIPKPGHSVKEFEKDAYSIADEWLANITKVQKMILEDKISVF.

ATP is bound at residue 136-141 (GQGSVD).

The protein belongs to the AdoMet synthase 2 family. Mg(2+) is required as a cofactor.

It carries out the reaction L-methionine + ATP + H2O = S-adenosyl-L-methionine + phosphate + diphosphate. It participates in amino-acid biosynthesis; S-adenosyl-L-methionine biosynthesis; S-adenosyl-L-methionine from L-methionine: step 1/1. Functionally, catalyzes the formation of S-adenosylmethionine from methionine and ATP. In Pyrococcus furiosus (strain ATCC 43587 / DSM 3638 / JCM 8422 / Vc1), this protein is S-adenosylmethionine synthase.